A 322-amino-acid polypeptide reads, in one-letter code: Ferredoxin--NADP reductase (322 aa).

6 residues coordinate FAD: Glu37, Gln45, Tyr50, Ile91, Phe128, and Asp290.

The protein belongs to the ferredoxin--NADP reductase type 2 family. As to quaternary structure, homodimer. The cofactor is FAD.

It catalyses the reaction 2 reduced [2Fe-2S]-[ferredoxin] + NADP(+) + H(+) = 2 oxidized [2Fe-2S]-[ferredoxin] + NADPH. The protein is Ferredoxin--NADP reductase of Malacoplasma penetrans (strain HF-2) (Mycoplasma penetrans).